The following is a 62-amino-acid chain: Small ribosomal subunit protein bS21 (62 aa).

This sequence belongs to the bacterial ribosomal protein bS21 family.

The sequence is that of Small ribosomal subunit protein bS21 (rpsU) from Mycoplasma genitalium (strain ATCC 33530 / DSM 19775 / NCTC 10195 / G37) (Mycoplasmoides genitalium).